Reading from the N-terminus, the 345-residue chain is Tyrosine-binding protein (345 aa).

The first 23 residues, 1–23 (MIKSKKILSLIIAGVLGVSMLTG), serve as a signal peptide directing secretion. Cysteine 24 carries the N-palmitoyl cysteine lipid modification. A lipid anchor (S-diacylglycerol cysteine) is attached at cysteine 24.

In terms of assembly, the complex is probably composed of two ATP-binding proteins (CDR20291_0806), two transmembrane proteins (CDR20291_0807) and a solute-binding protein (CDR20291_0805).

It localises to the cell membrane. Functionally, probably part of an ABC transporter complex involved in tyrosine uptake. May also import phenylalanine. This Clostridioides difficile (strain R20291) (Peptoclostridium difficile) protein is Tyrosine-binding protein.